The sequence spans 71 residues: Conotoxin TxMMSK-05 (71 aa).

An N-terminal signal peptide occupies residues 1–20 (MMSKLGALLIICLLLFPLTA). Residues 21-52 (VPLDGDQHADRPAERLQDDISSKHHPMFDAVR) constitute a propeptide that is removed on maturation. Intrachain disulfides connect Cys-54-Cys-70, Cys-55-Cys-66, and Cys-60-Cys-69.

The protein belongs to the conotoxin M superfamily. As to expression, expressed by the venom duct.

It is found in the secreted. In Conus textile (Cloth-of-gold cone), this protein is Conotoxin TxMMSK-05.